The chain runs to 247 residues: MNNLRTVSDTKRAFYSIHTRPVNSVYRRVVEELMVEMHLLRVNEDFRYDPIFALGVTTSFDRFMDGYQPENDKDAIFSAICKAQEADPVQMKKDGQRLTELAQSKSAQEMLDWITQAANSGGDELQWQLRNIAQNPKFKYSRLFAIGLFTLLELSEGNITQDEESLAEFLPNICTVLNISESKLQKDLEIYRGNLDKIAQVRQAMDDILEAQKKRREADQAKKEGSDDTPTTEASTPDSEPTSEVSS.

A coiled-coil region spans residues 198 to 224 (IAQVRQAMDDILEAQKKRREADQAKKE). The interval 209-247 (LEAQKKRREADQAKKEGSDDTPTTEASTPDSEPTSEVSS) is disordered. The segment covering 210 to 226 (EAQKKRREADQAKKEGS) has biased composition (basic and acidic residues). Polar residues predominate over residues 228-247 (DTPTTEASTPDSEPTSEVSS).

It belongs to the THF1 family.

Its function is as follows. May be involved in photosynthetic membrane biogenesis. The polypeptide is Protein Thf1 (Acaryochloris marina (strain MBIC 11017)).